Reading from the N-terminus, the 658-residue chain is Probable mitochondrial Rho GTPase gemA (658 aa).

Topologically, residues 1–633 are cytoplasmic; it reads MKNNIKVILI…NGSNGSNNSN (633 aa). Positions 2-175 constitute a Miro 1 domain; sequence KNNIKVILIG…LYASQTSVFF (174 aa). GTP contacts are provided by residues 11–18, 57–62, and 118–121; these read GDEQVGKS, DTFDDG, and NKLD. EF-hand domains are found at residues 191–226 and 311–346; these read GCER…CGHE and MGNE…TPKI. D204, D206, D208, S210, E215, D324, D326, D328, and D335 together coordinate Ca(2+). The 197-residue stretch at 420-616 folds into the Miro 2 domain; sequence RNIVNCYVFG…YHEMMETIVN (197 aa). GTP-binding positions include 429–436, 466–468, and 530–533; these read GAEAVGKT, LLK, and TKNN. Residues 532-575 are disordered; it reads NNNNNNNNNNNNNNNNNNNNLNNNNNNINNNNNNNNNNTTTTNA. A helical; Anchor for type IV membrane protein transmembrane segment spans residues 634–656; it reads ILTYLVIAAGVAGVGLLLSKYLA. Residues 657–658 are Mitochondrial intermembrane-facing; the sequence is KK.

It belongs to the mitochondrial Rho GTPase family.

It localises to the mitochondrion outer membrane. Mitochondrial GTPase involved in mitochondrial trafficking. Probably involved in control of anterograde transport of mitochondria and their subcellular distribution. The polypeptide is Probable mitochondrial Rho GTPase gemA (gemA) (Dictyostelium discoideum (Social amoeba)).